Consider the following 531-residue polypeptide: UDP-glucuronosyltransferase 1A5 (531 aa).

Positions 1-25 are cleaved as a signal peptide; it reads MGLHVTLQGLAGLLLLLYALPWAEG. Residues N116, N131, N139, N293, and N431 are each glycosylated (N-linked (GlcNAc...) asparagine). Residues 489–505 traverse the membrane as a helical segment; it reads VIGFLLAIVLTVVFIVY.

It belongs to the UDP-glycosyltransferase family. As to quaternary structure, homodimer. Homooligomer. Interacts with UGT1A1, UGT1A3, UGT1A4, UGT1A6, UGT1A7, UGT1A8, UGT1A9 and UGT1A10 to form heterodimers.

The protein resides in the endoplasmic reticulum membrane. It catalyses the reaction glucuronate acceptor + UDP-alpha-D-glucuronate = acceptor beta-D-glucuronoside + UDP + H(+). The catalysed reaction is zolasartan + UDP-alpha-D-glucuronate = zolarsartan-1-N-beta-D-glucuronide + UDP. Functionally, UDP-glucuronosyltransferase (UGT) that catalyzes phase II biotransformation reactions in which lipophilic substrates are conjugated with glucuronic acid to increase the metabolite's water solubility, thereby facilitating excretion into either the urine or bile. Essential for the elimination and detoxification of drugs, xenobiotics and endogenous compounds. Involved in the glucuronidation of the AGTR1 angiotensin receptor antagonist zolarsatan, a drug which can inhibit the effect of angiotensin II. In Rattus norvegicus (Rat), this protein is UDP-glucuronosyltransferase 1A5.